The following is a 99-amino-acid chain: Large ribosomal subunit protein uL23 (99 aa).

The protein belongs to the universal ribosomal protein uL23 family. In terms of assembly, part of the 50S ribosomal subunit. Contacts protein L29, and trigger factor when it is bound to the ribosome.

One of the early assembly proteins it binds 23S rRNA. One of the proteins that surrounds the polypeptide exit tunnel on the outside of the ribosome. Forms the main docking site for trigger factor binding to the ribosome. In Pseudomonas savastanoi pv. phaseolicola (strain 1448A / Race 6) (Pseudomonas syringae pv. phaseolicola (strain 1448A / Race 6)), this protein is Large ribosomal subunit protein uL23.